The primary structure comprises 309 residues: DnaJ protein ERDJ7 (309 aa).

The N-terminal stretch at 1 to 36 (MSQVGSAGEGSNSMAAAPPPRLLLLVVLLLVPVSNA) is a signal peptide. Topologically, residues 37 to 130 (IYCEEDDCYD…YRAYYGHKTD (94 aa)) are lumenal. Residues 43–107 (DCYDLLGVKQ…STRGQYDYAI (65 aa)) form the J domain. A glycan (N-linked (GlcNAc...) asparagine) is linked at N55. The chain crosses the membrane as a helical span at residues 131-151 (PRAVLIGLLLIISAFQYLNQF). Residues 152 to 219 (GRYSKAIETV…GVEKPSLWRL (68 aa)) lie on the Cytoplasmic side of the membrane. Residues 220 to 242 (YGVQFILLPYSIGKVLSWKFCWF) form a helical membrane-spanning segment. Residues 243-309 (WRYRIKKLPY…EMRKESKRRR (67 aa)) lie on the Lumenal side of the membrane.

The protein localises to the endoplasmic reticulum membrane. May play a role in protein folding in the endoplasmic reticulum. The chain is DnaJ protein ERDJ7 from Oryza sativa subsp. japonica (Rice).